The primary structure comprises 410 residues: Acetate kinase (410 aa).

Asn-7 contributes to the Mg(2+) binding site. Residue Lys-14 coordinates ATP. Arg-88 lines the substrate pocket. Asp-145 functions as the Proton donor/acceptor in the catalytic mechanism. ATP-binding positions include 203–207 (HAGNG), 278–280 (DTR), and 326–330 (GIGEN). Residue Glu-379 participates in Mg(2+) binding.

The protein belongs to the acetokinase family. Homodimer. Requires Mg(2+) as cofactor. It depends on Mn(2+) as a cofactor.

It localises to the cytoplasm. It carries out the reaction acetate + ATP = acetyl phosphate + ADP. Its pathway is metabolic intermediate biosynthesis; acetyl-CoA biosynthesis; acetyl-CoA from acetate: step 1/2. Catalyzes the formation of acetyl phosphate from acetate and ATP. Can also catalyze the reverse reaction. This chain is Acetate kinase, found in Aster yellows witches'-broom phytoplasma (strain AYWB).